The chain runs to 269 residues: NAD kinase (269 aa).

The active-site Proton acceptor is the aspartate 45. NAD(+) contacts are provided by residues 45–46 (DG), 122–123 (NE), arginine 149, aspartate 151, and alanine 186.

It belongs to the NAD kinase family. Requires a divalent metal cation as cofactor.

It is found in the cytoplasm. It catalyses the reaction NAD(+) + ATP = ADP + NADP(+) + H(+). Functionally, involved in the regulation of the intracellular balance of NAD and NADP, and is a key enzyme in the biosynthesis of NADP. Catalyzes specifically the phosphorylation on 2'-hydroxyl of the adenosine moiety of NAD to yield NADP. This is NAD kinase from Staphylococcus haemolyticus (strain JCSC1435).